Reading from the N-terminus, the 421-residue chain is ATP-dependent RNA helicase RhlB (421 aa).

The Q motif signature appears at T9–A37. The Helicase ATP-binding domain occupies L40 to V216. ATP is bound at residue A53–T60. Residues D162–D165 carry the DEAD box motif. The Helicase C-terminal domain occupies K240–L387. Residues D389–P421 form a disordered region. Over residues N403–S415 the composition is skewed to polar residues.

Belongs to the DEAD box helicase family. RhlB subfamily. In terms of assembly, component of the RNA degradosome, which is a multiprotein complex involved in RNA processing and mRNA degradation.

It is found in the cytoplasm. The enzyme catalyses ATP + H2O = ADP + phosphate + H(+). Its function is as follows. DEAD-box RNA helicase involved in RNA degradation. Has RNA-dependent ATPase activity and unwinds double-stranded RNA. The protein is ATP-dependent RNA helicase RhlB of Pseudoalteromonas atlantica (strain T6c / ATCC BAA-1087).